Reading from the N-terminus, the 232-residue chain is Phosphatidylserine decarboxylase proenzyme (232 aa).

Ser-190 serves as the catalytic Schiff-base intermediate with substrate; via pyruvic acid. Pyruvic acid (Ser); by autocatalysis is present on Ser-190.

This sequence belongs to the phosphatidylserine decarboxylase family. PSD-A subfamily. Heterodimer of a large membrane-associated beta subunit and a small pyruvoyl-containing alpha subunit. The cofactor is pyruvate. Is synthesized initially as an inactive proenzyme. Formation of the active enzyme involves a self-maturation process in which the active site pyruvoyl group is generated from an internal serine residue via an autocatalytic post-translational modification. Two non-identical subunits are generated from the proenzyme in this reaction, and the pyruvate is formed at the N-terminus of the alpha chain, which is derived from the carboxyl end of the proenzyme. The post-translation cleavage follows an unusual pathway, termed non-hydrolytic serinolysis, in which the side chain hydroxyl group of the serine supplies its oxygen atom to form the C-terminus of the beta chain, while the remainder of the serine residue undergoes an oxidative deamination to produce ammonia and the pyruvoyl prosthetic group on the alpha chain.

It is found in the cell membrane. It carries out the reaction a 1,2-diacyl-sn-glycero-3-phospho-L-serine + H(+) = a 1,2-diacyl-sn-glycero-3-phosphoethanolamine + CO2. It functions in the pathway phospholipid metabolism; phosphatidylethanolamine biosynthesis; phosphatidylethanolamine from CDP-diacylglycerol: step 2/2. Catalyzes the formation of phosphatidylethanolamine (PtdEtn) from phosphatidylserine (PtdSer). The polypeptide is Phosphatidylserine decarboxylase proenzyme (Rhodopseudomonas palustris (strain TIE-1)).